A 465-amino-acid polypeptide reads, in one-letter code: Probable protein phosphatase 2C 71 (465 aa).

3 disordered regions span residues 14–47, 68–119, and 133–191; these read RPCK…ACRA, RPRD…GEVT, and SGGA…PAEE. The segment covering 18-30 has biased composition (pro residues); sequence LAPPPPPPLPVSP. Composition is skewed to low complexity over residues 84-106 and 133-143; these read AVAP…AAAE and SGGAEATATSG. One can recognise a PPM-type phosphatase domain in the interval 222-460; the sequence is ASGAAILPHP…DDIAVVVSIV (239 aa). Mn(2+) contacts are provided by aspartate 254, glycine 255, aspartate 384, and aspartate 451.

Belongs to the PP2C family. The cofactor is Mg(2+). Requires Mn(2+) as cofactor.

It carries out the reaction O-phospho-L-seryl-[protein] + H2O = L-seryl-[protein] + phosphate. It catalyses the reaction O-phospho-L-threonyl-[protein] + H2O = L-threonyl-[protein] + phosphate. The sequence is that of Probable protein phosphatase 2C 71 from Oryza sativa subsp. japonica (Rice).